A 208-amino-acid polypeptide reads, in one-letter code: uncharacterized protein (208 aa).

The first 16 residues, 1 to 16 (MKFLLIACLAVPAILA), serve as a signal peptide directing secretion. Asn-79 carries an N-linked (GlcNAc...) asparagine glycan.

This is an uncharacterized protein from Caenorhabditis elegans.